Here is a 149-residue protein sequence, read N- to C-terminus: 3-dehydroquinate dehydratase (149 aa).

Catalysis depends on Y24, which acts as the Proton acceptor. Substrate is bound by residues N76, H82, and D89. Catalysis depends on H102, which acts as the Proton donor. Substrate-binding positions include 103–104 (LS) and R113.

The protein belongs to the type-II 3-dehydroquinase family. As to quaternary structure, homododecamer.

The catalysed reaction is 3-dehydroquinate = 3-dehydroshikimate + H2O. The protein operates within metabolic intermediate biosynthesis; chorismate biosynthesis; chorismate from D-erythrose 4-phosphate and phosphoenolpyruvate: step 3/7. Catalyzes a trans-dehydration via an enolate intermediate. This chain is 3-dehydroquinate dehydratase, found in Acinetobacter baylyi (strain ATCC 33305 / BD413 / ADP1).